The following is a 356-amino-acid chain: DNA polymerase IV (356 aa).

One can recognise a UmuC domain in the interval 6–187; that stretch reads IIHIDMDYFF…LDIGDFPGVG (182 aa). Mg(2+) is bound by residues aspartate 10 and aspartate 105. Glutamate 106 is a catalytic residue.

It belongs to the DNA polymerase type-Y family. Monomer. Mg(2+) serves as cofactor.

It localises to the cytoplasm. It catalyses the reaction DNA(n) + a 2'-deoxyribonucleoside 5'-triphosphate = DNA(n+1) + diphosphate. In terms of biological role, poorly processive, error-prone DNA polymerase involved in untargeted mutagenesis. Copies undamaged DNA at stalled replication forks, which arise in vivo from mismatched or misaligned primer ends. These misaligned primers can be extended by PolIV. Exhibits no 3'-5' exonuclease (proofreading) activity. May be involved in translesional synthesis, in conjunction with the beta clamp from PolIII. The chain is DNA polymerase IV from Staphylococcus epidermidis (strain ATCC 12228 / FDA PCI 1200).